We begin with the raw amino-acid sequence, 219 residues long: Protein-L-isoaspartate O-methyltransferase (219 aa).

The active site involves Ser-64.

The protein belongs to the methyltransferase superfamily. L-isoaspartyl/D-aspartyl protein methyltransferase family.

It is found in the cytoplasm. The enzyme catalyses [protein]-L-isoaspartate + S-adenosyl-L-methionine = [protein]-L-isoaspartate alpha-methyl ester + S-adenosyl-L-homocysteine. Catalyzes the methyl esterification of L-isoaspartyl residues in peptides and proteins that result from spontaneous decomposition of normal L-aspartyl and L-asparaginyl residues. It plays a role in the repair and/or degradation of damaged proteins. This chain is Protein-L-isoaspartate O-methyltransferase, found in Chlorobaculum parvum (strain DSM 263 / NCIMB 8327) (Chlorobium vibrioforme subsp. thiosulfatophilum).